The primary structure comprises 349 residues: tRNA pseudouridine synthase D (349 aa).

Phenylalanine 27 provides a ligand contact to substrate. The Nucleophile role is filled by aspartate 80. Asparagine 129 contacts substrate. Residues 155 to 303 (GVPNYFGPQR…VEAARRAMLL (149 aa)) form the TRUD domain. Phenylalanine 329 serves as a coordination point for substrate.

Belongs to the pseudouridine synthase TruD family.

The catalysed reaction is uridine(13) in tRNA = pseudouridine(13) in tRNA. In terms of biological role, responsible for synthesis of pseudouridine from uracil-13 in transfer RNAs. This chain is tRNA pseudouridine synthase D, found in Cronobacter sakazakii (strain ATCC BAA-894) (Enterobacter sakazakii).